A 230-amino-acid chain; its full sequence is L-aspartate/glutamate-specific racemase (230 aa).

Substrate is bound by residues M10, Q52, and 83-85 (TNT). T83 acts as the Proton donor in catalysis. C197 acts as the Proton acceptor in catalysis. Residue 198 to 199 (TE) coordinates substrate.

It belongs to the aspartate/glutamate racemases family. Homodimer.

It catalyses the reaction L-glutamate = D-glutamate. The enzyme catalyses L-aspartate = D-aspartate. Exhibits racemase activity for both L-glutamate and L-aspartate. This chain is L-aspartate/glutamate-specific racemase, found in Escherichia coli O157:H7.